A 526-amino-acid polypeptide reads, in one-letter code: GMP synthase [glutamine-hydrolyzing] (526 aa).

One can recognise a Glutamine amidotransferase type-1 domain in the interval 9–208; the sequence is RILILDFGSQ…VKDICGCECL (200 aa). C86 (nucleophile) is an active-site residue. Active-site residues include H182 and E184. A GMPS ATP-PPase domain is found at 209 to 401; it reads WTPATIIDDA…LGLPYDMLYR (193 aa). 236–242 lines the ATP pocket; the sequence is SGGVDSS.

As to quaternary structure, homodimer.

It carries out the reaction XMP + L-glutamine + ATP + H2O = GMP + L-glutamate + AMP + diphosphate + 2 H(+). The protein operates within purine metabolism; GMP biosynthesis; GMP from XMP (L-Gln route): step 1/1. In terms of biological role, catalyzes the synthesis of GMP from XMP. In Aeromonas salmonicida (strain A449), this protein is GMP synthase [glutamine-hydrolyzing].